The following is a 930-amino-acid chain: Type I restriction enzyme SsaAORF53P endonuclease subunit (930 aa).

In terms of domain architecture, Helicase ATP-binding spans His254–Gly418. ATP is bound at residue Thr268–Thr274.

It belongs to the HsdR family. As to quaternary structure, the type I restriction/modification system is composed of three polypeptides R, M and S.

The enzyme catalyses Endonucleolytic cleavage of DNA to give random double-stranded fragments with terminal 5'-phosphates, ATP is simultaneously hydrolyzed.. The restriction (R) subunit of a type I restriction enzyme that recognizes an undetermined sequence and cleaves a random distance away. Subunit R is required for both nuclease and ATPase activities, but not for modification. After locating a non-methylated recognition site, the enzyme complex serves as a molecular motor that translocates DNA in an ATP-dependent manner until a collision occurs that triggers cleavage. This is Type I restriction enzyme SsaAORF53P endonuclease subunit from Staphylococcus saprophyticus subsp. saprophyticus (strain ATCC 15305 / DSM 20229 / NCIMB 8711 / NCTC 7292 / S-41).